Here is a 38-residue protein sequence, read N- to C-terminus: Potassium channel toxin alpha-KTx 2.21 (38 aa).

Disulfide bonds link Cys7–Cys29, Cys13–Cys34, and Cys17–Cys36.

As to expression, expressed by the venom gland.

It localises to the secreted. Functionally, inhibits human voltage-gated potassium (Kv) channels Kv1.2/KCNA2 and Kv1.3/KCNA3. Does not block human Kv1.1/KCNA1 at 100nM concentration. This chain is Potassium channel toxin alpha-KTx 2.21, found in Centruroides bonito (Scorpion).